The primary structure comprises 279 residues: Small ribosomal subunit protein uS2 (279 aa).

Residues 255-279 form a disordered region; that stretch reads LLAGATTAAPEAAAGEAAAAPEQSS.

Belongs to the universal ribosomal protein uS2 family.

The chain is Small ribosomal subunit protein uS2 from Mycolicibacterium gilvum (strain PYR-GCK) (Mycobacterium gilvum (strain PYR-GCK)).